A 658-amino-acid polypeptide reads, in one-letter code: DNA mismatch repair protein MutL (658 aa).

A compositionally biased stretch (basic and acidic residues) spans 114–130; it reads RQEDSSHATQVKAEDGK. 3 disordered regions span residues 114–137, 369–401, and 438–457; these read RQED…PTAA, DYPT…APQQ, and FGNM…LSDG.

It belongs to the DNA mismatch repair MutL/HexB family.

Its function is as follows. This protein is involved in the repair of mismatches in DNA. It is required for dam-dependent methyl-directed DNA mismatch repair. May act as a 'molecular matchmaker', a protein that promotes the formation of a stable complex between two or more DNA-binding proteins in an ATP-dependent manner without itself being part of a final effector complex. The sequence is that of DNA mismatch repair protein MutL from Neisseria meningitidis serogroup A / serotype 4A (strain DSM 15465 / Z2491).